Reading from the N-terminus, the 226-residue chain is Late protein I226R (226 aa).

The N-terminal stretch at 1 to 16 (MKMETFLVCLFHNADG) is a signal peptide. 2 N-linked (GlcNAc...) asparagine; by host glycosylation sites follow: Asn142 and Asn164.

Belongs to the asfivirus I226R family.

Functionally, plays a role in the inhibition of host NF-kappa-B and IRF3 signaling pathways. Mechanistically, promotes the degradation of host IKBKG through enhancing its ubiquitination leading to inhibition of both pathways. The sequence is that of Late protein I226R from African swine fever virus (isolate Warthog/Namibia/Wart80/1980) (ASFV).